A 460-amino-acid polypeptide reads, in one-letter code: Kynureninase (460 aa).

Pyridoxal 5'-phosphate is bound by residues leucine 127, threonine 128, 165–168 (FPSD), aspartate 249, histidine 252, and tyrosine 274. Lysine 275 is subject to N6-(pyridoxal phosphate)lysine. The pyridoxal 5'-phosphate site is built by tryptophan 304 and asparagine 332.

The protein belongs to the kynureninase family. In terms of assembly, homodimer. It depends on pyridoxal 5'-phosphate as a cofactor.

The protein localises to the cytoplasm. It catalyses the reaction L-kynurenine + H2O = anthranilate + L-alanine + H(+). It carries out the reaction 3-hydroxy-L-kynurenine + H2O = 3-hydroxyanthranilate + L-alanine + H(+). Its pathway is amino-acid degradation; L-kynurenine degradation; L-alanine and anthranilate from L-kynurenine: step 1/1. It participates in cofactor biosynthesis; NAD(+) biosynthesis; quinolinate from L-kynurenine: step 2/3. Its function is as follows. Catalyzes the cleavage of L-kynurenine (L-Kyn) and L-3-hydroxykynurenine (L-3OHKyn) into anthranilic acid (AA) and 3-hydroxyanthranilic acid (3-OHAA), respectively. In Monosiga brevicollis (Choanoflagellate), this protein is Kynureninase.